The following is a 332-amino-acid chain: Phosphate acyltransferase (332 aa).

This sequence belongs to the PlsX family. Homodimer. Probably interacts with PlsY.

It localises to the cytoplasm. The catalysed reaction is a fatty acyl-[ACP] + phosphate = an acyl phosphate + holo-[ACP]. It functions in the pathway lipid metabolism; phospholipid metabolism. Functionally, catalyzes the reversible formation of acyl-phosphate (acyl-PO(4)) from acyl-[acyl-carrier-protein] (acyl-ACP). This enzyme utilizes acyl-ACP as fatty acyl donor, but not acyl-CoA. This is Phosphate acyltransferase from Fusobacterium nucleatum subsp. nucleatum (strain ATCC 25586 / DSM 15643 / BCRC 10681 / CIP 101130 / JCM 8532 / KCTC 2640 / LMG 13131 / VPI 4355).